Here is a 77-residue protein sequence, read N- to C-terminus: MKLIIFTGLALFAIVSLIEAEEESGRGCILLYGECTKATGSCCSNLICDCYRKLKKGVQIARQCFCSEKDVIYKKDI.

The signal sequence occupies residues 1 to 20 (MKLIIFTGLALFAIVSLIEA). A propeptide spanning residues 21-26 (EEESGR) is cleaved from the precursor.

Belongs to the neurotoxin 19 (CSTX) family. 10 (U11-Lctx) subfamily. Post-translationally, contains 4 disulfide bonds. In terms of tissue distribution, expressed by the venom gland.

It is found in the secreted. This is U11-lycotoxin-Ls1b from Lycosa singoriensis (Wolf spider).